A 306-amino-acid chain; its full sequence is MNSASKLFVVLASPANQRNMATLKDLKIRLGTVKTISKLTKTLHMVASSKLRSAEKKAEESGPYSVGPQKVLGVVETADAFNTATEPIEDRSNKQLLIAITTDTGMCGPVNHQIIKTIKALLKDDAKQEILVSTTGLKGVAPIVADFPNQFLINGRDFGKADYSFPEVLLFLNEIISKVPNYDSALVVYNKFKNALSYSVDRQFIPGFNLLELNRDKFYEYTTSEDRAATMKDLSEFYLASSLWTGLYQNRASEMAARMVAMDNASKNGESISQALGLQYNRARQAMITSELIEIVSGASAIESSD.

The N-terminal 17 residues, 1-17 (MNSASKLFVVLASPANQ), are a transit peptide targeting the mitochondrion.

The protein belongs to the ATPase gamma chain family. In terms of assembly, component of the ATP synthase complex composed at least of ATP5F1A/subunit alpha, ATP5F1B/subunit beta, ATP5MC1/subunit c (homooctomer), MT-ATP6/subunit a, MT-ATP8/subunit 8, ATP5ME/subunit e, ATP5MF/subunit f, ATP5MG/subunit g, ATP5MK/subunit k, ATP5MJ/subunit j, ATP5F1C/subunit gamma, ATP5F1D/subunit delta, ATP5F1E/subunit epsilon, ATP5PF/subunit F6, ATP5PB/subunit b, ATP5PD/subunit d, ATP5PO/subunit OSCP. ATP synthase complex consists of a soluble F(1) head domain (subunits alpha(3) and beta(3)) - the catalytic core - and a membrane F(0) domain - the membrane proton channel (subunits c, a, 8, e, f, g, k and j). These two domains are linked by a central stalk (subunits gamma, delta, and epsilon) rotating inside the F1 region and a stationary peripheral stalk (subunits F6, b, d, and OSCP).

The protein localises to the mitochondrion inner membrane. In terms of biological role, subunit gamma, of the mitochondrial membrane ATP synthase complex (F(1)F(0) ATP synthase or Complex V) that produces ATP from ADP in the presence of a proton gradient across the membrane which is generated by electron transport complexes of the respiratory chain. ATP synthase complex consist of a soluble F(1) head domain - the catalytic core - and a membrane F(1) domain - the membrane proton channel. These two domains are linked by a central stalk rotating inside the F(1) region and a stationary peripheral stalk. During catalysis, ATP synthesis in the catalytic domain of F(1) is coupled via a rotary mechanism of the central stalk subunits to proton translocation. In vivo, can only synthesize ATP although its ATP hydrolase activity can be activated artificially in vitro. With the central stalk subunit delta, is essential for the biogenesis of F(1) catalytic part of the ATP synthase complex namely in the formation of F1 assembly intermediate. This chain is ATP synthase F(1) complex subunit gamma, mitochondrial, found in Dictyostelium discoideum (Social amoeba).